Here is a 259-residue protein sequence, read N- to C-terminus: UPF0739 protein C1orf74 homolog (259 aa).

This sequence belongs to the UPF0739 family.

In Danio rerio (Zebrafish), this protein is UPF0739 protein C1orf74 homolog.